We begin with the raw amino-acid sequence, 145 residues long: Large ribosomal subunit protein uL11 (145 aa).

The protein belongs to the universal ribosomal protein uL11 family. Part of the ribosomal stalk of the 50S ribosomal subunit. Interacts with L10 and the large rRNA to form the base of the stalk. L10 forms an elongated spine to which L12 dimers bind in a sequential fashion forming a multimeric L10(L12)X complex. In terms of processing, one or more lysine residues are methylated.

Functionally, forms part of the ribosomal stalk which helps the ribosome interact with GTP-bound translation factors. The sequence is that of Large ribosomal subunit protein uL11 from Rickettsia canadensis (strain McKiel).